The primary structure comprises 473 residues: Reticulon-4 receptor (473 aa).

The signal sequence occupies residues 1–26; the sequence is MKRASAGGSRLLAWVLWLQAWQVAAP. Cystine bridges form between cysteine 27-cysteine 33 and cysteine 31-cysteine 43. Positions 27–54 constitute an LRRNT domain; the sequence is CPGACVCYNEPKVTTSCPQQGLQAVPVG. 9 LRR repeats span residues 55 to 79, 81 to 103, 104 to 128, 129 to 152, 153 to 176, 178 to 200, 202 to 224, 225 to 248, and 250 to 273; these read IPAASQRIFLHGNRISHVPAASFRA, RNLTILWLHSNVLARIDAAAFTG, LALLEQLDLSDNAQLRSVDPATFHG, LGRLHTLHLDRCGLQELGPGLFRG, LAALQYLYLQDNALQALPDDTFRD, GNLTHLFLHGNRISSVPERAFRG, HSLDRLLLHQNRVAHVHPHAFRD, LGRLMTLYLFANNLSALPTEALAP, and RALQYLRLNDNPWVCDCRARPLWA. N-linked (GlcNAc...) asparagine glycosylation occurs at asparagine 82. A glycan (N-linked (GlcNAc...) asparagine) is linked at asparagine 179. Residues 260–310 enclose the LRRCT domain; the sequence is NPWVCDCRARPLWAWLQKFRGSSSEVPCSLPQRLAGRDLKRLAANDLQGCA. Disulfide bonds link cysteine 264–cysteine 287, cysteine 266–cysteine 335, and cysteine 309–cysteine 336. Residues 346-447 are disordered; sequence VLEPGRPASA…GGGTGDSEGS (102 aa). Over residues 413 to 429 the composition is skewed to basic residues; sequence PRRRPGCSRKNRTRSHC. A compositionally biased stretch (gly residues) spans 434–445; it reads AGSGGGGTGDSE. Serine 447 is lipidated: GPI-anchor amidated serine. The propeptide at 448–473 is removed in mature form; sequence GALPSLTCSLTPLGLALVLWTVLGPC.

The protein belongs to the Nogo receptor family. As to quaternary structure, homodimer. Interacts with MAG. Interacts with RTN4. Interacts with NGFR. Interacts with LINGO1. Interacts with KIAA0319L. Interacts with OLFM1; this inhibits interaction with LINGO1 and NGFR. Interacts with OMG. N-glycosylated. O-glycosylated. Contains terminal sialic acid groups on its glycan chains. In terms of tissue distribution, widespread in the brain but highest levels in the gray matter. Low levels in heart and kidney; not expressed in oligodendrocytes (white matter).

The protein localises to the cell membrane. Its subcellular location is the membrane raft. It localises to the cell projection. The protein resides in the dendrite. It is found in the axon. The protein localises to the perikaryon. Functionally, receptor for RTN4, OMG and MAG. Functions as a receptor for the sialylated gangliosides GT1b and GM1. Besides, functions as a receptor for chondroitin sulfate proteoglycans. Can also bind heparin. Intracellular signaling cascades are triggered via the coreceptor NGFR. Signaling mediates activation of Rho and downstream reorganization of the actin cytoskeleton. Mediates axonal growth inhibition. Plays a role in regulating axon regeneration and neuronal plasticity in the adult central nervous system. Plays a role in postnatal brain development. Required for normal axon migration across the brain midline and normal formation of the corpus callosum. Protects motoneurons against apoptosis; protection against apoptosis is probably mediated via interaction with MAG. Acts in conjunction with RTN4 and LINGO1 in regulating neuronal precursor cell motility during cortical development. Like other family members, plays a role in restricting the number dendritic spines and the number of synapses that are formed during brain development. This Homo sapiens (Human) protein is Reticulon-4 receptor (RTN4R).